We begin with the raw amino-acid sequence, 484 residues long: tRNA sulfurtransferase (484 aa).

The THUMP domain maps to 62–166 (GPVIDELVRI…DDSYHIAHRR (105 aa)). ATP-binding positions include 184 to 185 (LI), K266, G288, and Q297. C345 and C456 are disulfide-bonded. Residues 404 to 482 (PSVDDVIIDV…GHGNIKVYAP (79 aa)) enclose the Rhodanese domain. Catalysis depends on C456, which acts as the Cysteine persulfide intermediate.

The protein belongs to the ThiI family.

Its subcellular location is the cytoplasm. The enzyme catalyses [ThiI sulfur-carrier protein]-S-sulfanyl-L-cysteine + a uridine in tRNA + 2 reduced [2Fe-2S]-[ferredoxin] + ATP + H(+) = [ThiI sulfur-carrier protein]-L-cysteine + a 4-thiouridine in tRNA + 2 oxidized [2Fe-2S]-[ferredoxin] + AMP + diphosphate. The catalysed reaction is [ThiS sulfur-carrier protein]-C-terminal Gly-Gly-AMP + S-sulfanyl-L-cysteinyl-[cysteine desulfurase] + AH2 = [ThiS sulfur-carrier protein]-C-terminal-Gly-aminoethanethioate + L-cysteinyl-[cysteine desulfurase] + A + AMP + 2 H(+). It functions in the pathway cofactor biosynthesis; thiamine diphosphate biosynthesis. Catalyzes the ATP-dependent transfer of a sulfur to tRNA to produce 4-thiouridine in position 8 of tRNAs, which functions as a near-UV photosensor. Also catalyzes the transfer of sulfur to the sulfur carrier protein ThiS, forming ThiS-thiocarboxylate. This is a step in the synthesis of thiazole, in the thiamine biosynthesis pathway. The sulfur is donated as persulfide by IscS. In Marinobacter nauticus (strain ATCC 700491 / DSM 11845 / VT8) (Marinobacter aquaeolei), this protein is tRNA sulfurtransferase.